Reading from the N-terminus, the 1948-residue chain is Receptor-type tyrosine-protein phosphatase S (1948 aa).

An N-terminal signal peptide occupies residues 1-29 (MAPTWGPGMVSVVGPMGLLVVLLVGGCAA). Topologically, residues 30–1282 (EEPPRFIKEP…PQPIVDGEEG (1253 aa)) are extracellular. 3 Ig-like C2-type domains span residues 33-123 (PRFI…AKLT), 135-233 (PNID…ANLY), and 245-327 (PRFS…AQIT). 2 disulfides stabilise this stretch: Cys-54/Cys-107 and Cys-156/Cys-216. Residues 68–72 (KKGKK) form an important for binding to glycosaminoglycan chains region. 2 N-linked (GlcNAc...) asparagine glycosylation sites follow: Asn-263 and Asn-308. A disulfide bridge connects residues Cys-266 and Cys-311. Fibronectin type-III domains are found at residues 334–424 (APGT…TGEQ), 429–523 (APRN…TQQG), 527–616 (QPMN…TLQS), 621–718 (PPQD…TDED), 723–831 (PPRK…TKGA), 832–930 (VLGR…TPRG), 931–1033 (HPQI…FLRD), and 1036–1120 (SPKN…TAFN). Positions 700–724 (TEVGPGPESSPVVVRTDEDVPSAPP) are disordered. Over residues 701-713 (EVGPGPESSPVVV) the composition is skewed to low complexity. N-linked (GlcNAc...) asparagine glycosylation is present at Asn-733. Asn-940 carries an N-linked (GlcNAc...) asparagine glycan. A helical membrane pass occupies residues 1283–1303 (LIWVIGPVLAVVFIICIVIAI). Topologically, residues 1304–1948 (LLYKNKPDSK…YLGSFDHYAT (645 aa)) are cytoplasmic. Basic and acidic residues-rich tracts occupy residues 1311–1321 (DSKRKDSEPRT) and 1331–1340 (APHHPKDPVE). Positions 1311-1340 (DSKRKDSEPRTKCLLNNADLAPHHPKDPVE) are disordered. Tyrosine-protein phosphatase domains follow at residues 1393–1648 (LSQE…LLEA) and 1680–1939 (MELE…ALEY). Substrate contacts are provided by residues Asp-1557, 1589–1595 (CSAGVGR), and Gln-1633. The Phosphocysteine intermediate role is filled by Cys-1589. The Phosphocysteine intermediate role is filled by Cys-1880.

It belongs to the protein-tyrosine phosphatase family. Receptor class 2A subfamily. In terms of assembly, binding to large heparan sulfate proteoglycan structures promotes oligomerization. Binding to chondroitin sulfate proteoglycan does not lead to oligomerization. Interacts (via Ig-like domains) with NTRK3. Interacts (via Ig-like domains) with NTRK1, but does not form detectable complexes with NTRK2. Interacts with PPFIA1, PPFIA2 and PPFIA3. Post-translationally, a cleavage occurs, separating the extracellular domain from the transmembrane segment. This process called 'ectodomain shedding' is thought to be involved in receptor desensitization, signal transduction and/or membrane localization. As to expression, detected in peripheral blood plasmacytoid dendritic cells (at protein level). Detected in all tissues tested except for placenta and liver. Detected in peripheral blood plasmacytoid dendritic cells.

It is found in the cell membrane. The protein resides in the cell projection. It localises to the axon. Its subcellular location is the perikaryon. The protein localises to the cytoplasmic vesicle. It is found in the secretory vesicle. The protein resides in the synaptic vesicle membrane. It localises to the synapse. Its subcellular location is the synaptosome. The protein localises to the postsynaptic density. It is found in the neuron projection. The protein resides in the growth cone. The enzyme catalyses O-phospho-L-tyrosyl-[protein] + H2O = L-tyrosyl-[protein] + phosphate. In terms of biological role, cell surface receptor that binds to glycosaminoglycans, including chondroitin sulfate proteoglycans and heparan sulfate proteoglycan. Binding to chondroitin sulfate and heparan sulfate proteoglycans has opposite effects on PTPRS oligomerization and regulation of neurite outgrowth. Contributes to the inhibition of neurite and axonal outgrowth by chondroitin sulfate proteoglycans, also after nerve transection. Plays a role in stimulating neurite outgrowth in response to the heparan sulfate proteoglycan GPC2. Required for normal brain development, especially for normal development of the pituitary gland and the olfactory bulb. Functions as a tyrosine phosphatase. Mediates dephosphorylation of NTRK1, NTRK2 and NTRK3. Plays a role in down-regulation of signaling cascades that lead to the activation of Akt and MAP kinases. Down-regulates TLR9-mediated activation of NF-kappa-B, as well as production of TNF, interferon alpha and interferon beta. The polypeptide is Receptor-type tyrosine-protein phosphatase S (PTPRS) (Homo sapiens (Human)).